Here is a 440-residue protein sequence, read N- to C-terminus: Tuliposide B-converting enzyme 1, amyloplastic (440 aa).

Residues 1 to 58 (MSIVSFCSSLPAGPHGFKHGRGTRDMVHMPCIVRRTARSPAQACRLLRWNKYHCAAVP) constitute an amyloplast transit peptide. Residue Ser-232 is the Acyl-ester intermediate of the active site. Residues Asp-325 and His-357 each act as charge relay system in the active site.

This sequence belongs to the AB hydrolase superfamily. Homodimer. Not glycosylated. Expressed in the pollen grains.

It is found in the plastid. The protein localises to the amyloplast. It catalyses the reaction 6-tuliposide B = tulipalin B + D-glucose. Its activity is regulated as follows. Inhibited by Ag(+), Cu(2+), Fe(2+), Hg(2+), V(3+) and phenylmethylsulfonyl fluoride (PMSF). In terms of biological role, lactone-forming carboxylesterase, specifically catalyzing intramolecular transesterification, but not hydrolysis. Involved in the biosynthesis of tulipalins, defensive chemicals that show antimicrobial activities against a broad range of strains of bacteria and fungi. Substrates are 6-tuliposide B &gt; 6-tuliposide A. This is Tuliposide B-converting enzyme 1, amyloplastic from Tulipa gesneriana (Garden tulip).